Consider the following 574-residue polypeptide: Transmembrane glycoprotein NMB (574 aa).

Positions 1 to 22 (MESLCGVLGFLLLAAGLPLQAA) are cleaved as a signal peptide. Residues 23–502 (KRFRDVLGHE…DPDSPLRAVN (480 aa)) are Extracellular-facing. N93, N134, N200, N249, N275, N296, N300, N306, and N312 each carry an N-linked (GlcNAc...) asparagine glycan. The region spanning 250 to 338 (LSDEIFLRDL…STPPPPSTPP (89 aa)) is the PKD domain. A disordered region spans residues 320–353 (PGPCPPPSPSTPPPPSTPPSPPPSPLPTLSTPSP). Residues 321-345 (GPCPPPSPSTPPPPSTPPSPPPSPL) are compositionally biased toward pro residues. N-linked (GlcNAc...) asparagine glycosylation is found at N463 and N471. The chain crosses the membrane as a helical span at residues 503-523 (GVLISIGCLAVLVTMVTILLY). Topologically, residues 524–574 (KKHKAYKPIGNCPRNTVKGKGLSVLLSHAKAPFFRGDQEKDPLLQDKPRTL) are cytoplasmic. S546 is subject to Phosphoserine. Positions 558 to 560 (RGD) match the Cell attachment site motif.

It belongs to the PMEL/NMB family. May be up-regulated in bone metastatic breast cancer cells.

It localises to the cell membrane. Its subcellular location is the melanosome membrane. It is found in the early endosome membrane. Its function is as follows. Could be a melanogenic enzyme. This chain is Transmembrane glycoprotein NMB (Gpnmb), found in Mus musculus (Mouse).